A 579-amino-acid chain; its full sequence is Leucine-rich repeat-containing protein 15 (579 aa).

Positions 1–21 are cleaved as a signal peptide; that stretch reads MPLKHYLLLLVSCQAWAAGLA. Residues 22–53 enclose the LRRNT domain; sequence YYGCPSECTCSRASQVECTGAQIVAMPSPLPW. The Extracellular segment spans residues 22–536; it reads YYGCPSECTC…TWGMTDAQSG (515 aa). LRR repeat units follow at residues 54-75, 78-99, 102-123, 126-147, 150-171, 174-195, 198-219, 222-243, 246-267, 270-291, 294-315, 318-339, 342-363, 366-387, and 390-411; these read NAMS…KFLN, ALIA…AFRN, SLRH…LFQD, NLET…QFSQ, NLKE…VFDH, GLTK…VFQH, NLQV…TFDA, NLQE…LFHN, NLQR…IFMQ, HLNK…VFGP, NLRE…AFSH, QLQV…AFNG, NLRE…VFRS, NLRN…IFAN, and GLMT…IFDH. Asn75 carries an N-linked (GlcNAc...) asparagine glycan. N-linked (GlcNAc...) asparagine glycosylation is present at Asn369. The 51-residue stretch at 423–473 folds into the LRRCT domain; it reads NPWRCDSNILPLHDWLILNRARLGTDTLPVCSSPASVRGQSLVIINVNFPG. Residues 476 to 509 form a disordered region; it reads VQGPETPEVSSYPDTSSYPDSTSISSTTEITRST. The span at 485-506 shows a compositional bias: low complexity; it reads SSYPDTSSYPDSTSISSTTEIT. Residues 537 to 557 traverse the membrane as a helical segment; that stretch reads LAIAAIVIGIIALACSLAACI. The Cytoplasmic segment spans residues 558–579; sequence CCCCCKKRSQAVLMQMKAPNEC.

As to expression, expressed in chodrocytes (at protein level).

The protein localises to the cell membrane. This is Leucine-rich repeat-containing protein 15 (Lrrc15) from Mus musculus (Mouse).